The primary structure comprises 281 residues: Aquaporin-9 (281 aa).

Topologically, residues 1–17 are cytoplasmic; that stretch reads MGAFVNTKVYIENKNIR. The chain crosses the membrane as a helical span at residues 18–36; it reads DWLSEALSMFMYMSLLLGS. Over 37 to 50 the chain is Extracellular; that stretch reads AATGHFSGREDDAL. The helical transmembrane segment at 51-69 threads the bilayer; the sequence is FGVIFQGFSITFGIYIGGA. Residues 70 to 71 lie on the Cytoplasmic side of the membrane; sequence MS. The segment at residues 72–84 is an intramembrane region (discontinuously helical); it reads GAIINPALTLAVA. Residues 76 to 78 carry the NPA 1 motif; the sequence is NPA. The Cytoplasmic segment spans residues 85–90; it reads LLGKIS. The helical transmembrane segment at 91 to 115 threads the bilayer; it reads WRKCIVLQSAQYIGSFIASAVVYLI. Residues 116 to 157 lie on the Extracellular side of the membrane; the sequence is YNDSLDAFGAGANFTATEPGVFRKDVAGIWSTFPKTYLKERG. N-linked (GlcNAc...) asparagine glycans are attached at residues Asn-117 and Asn-128. Residues 158-175 traverse the membrane as a helical segment; that stretch reads AIFNQIFCSMLLTFGFLA. Over 176 to 187 the chain is Cytoplasmic; sequence ISDYKNFRPSKG. The helical transmembrane segment at 188–204 threads the bilayer; sequence LFPIAVGLLVMTVFLAF. At 205-207 the chain is on the extracellular side; the sequence is SYS. The discontinuously helical intramembrane region spans 208 to 222; the sequence is TGAAMNPARDFSPRL. The NPA 2 motif lies at 213 to 215; sequence NPA. The Extracellular portion of the chain corresponds to 223–241; sequence WSLIIGYGIEVFSYNQYEW. A helical transmembrane segment spans residues 242 to 262; it reads FWIPWLMPYVGAMLGALIYQL. Residues 263–281 are Cytoplasmic-facing; the sequence is LIGAQWSKGQKGESKHKDP.

Belongs to the MIP/aquaporin (TC 1.A.8) family.

It localises to the cell membrane. It catalyses the reaction H2O(in) = H2O(out). Functionally, aquaglyceroporin that may modulate the water content and osmolytes during anhydrobiosis. The chain is Aquaporin-9 from Milnesium tardigradum (Water bear).